The following is a 930-amino-acid chain: Probable SapB synthase (930 aa).

A Protein kinase domain is found at 256 to 516 (YTVESALHFS…GSTRADETTR (261 aa)). ATP is bound by residues 262-270 (LHFSNGGGV) and Lys-285. The Proton acceptor role is filled by Asp-395. A helical membrane pass occupies residues 447–467 (YALACLRIVLFLPLTSLLAVD). The span at 501 to 527 (GSTRVDGSTRADETTRADETTRLDVTT) shows a compositional bias: basic and acidic residues. 2 disordered regions span residues 501–558 (GSTR…RDSM) and 911–930 (PFLPPPRRSGGPLTRPHQEP). Positions 532-546 (APDAARRPAGPVAPV) are enriched in low complexity. A compositionally biased stretch (basic and acidic residues) spans 547-556 (RPDDWPRSRD).

In the N-terminal section; belongs to the protein kinase superfamily.

It is found in the cell membrane. Required for aerial hyphae formation. Probably involved in processing the precursor of SapB to its mature form. The sequence is that of Probable SapB synthase from Streptomyces coelicolor (strain ATCC BAA-471 / A3(2) / M145).